Consider the following 802-residue polypeptide: Cullin-4 (802 aa).

2 stretches are compositionally biased toward low complexity: residues 1–33 (MNFN…NNNN) and 656–676 (STSS…ASGS). 2 disordered regions span residues 1–43 (MNFN…SLAG) and 656–686 (STSS…GGAT). In terms of domain architecture, Cullin neddylation spans 734–794 (DRQYQVDAAI…KEYLCRDPEN (61 aa)). Lys748 is covalently cross-linked (Glycyl lysine isopeptide (Lys-Gly) (interchain with G-Cter in NEDD8)).

Belongs to the cullin family. In terms of processing, neddylated. Deneddylated via its interaction with the COP9 signalosome (CSN) complex.

The protein operates within protein modification; protein ubiquitination. In terms of biological role, probable core component of cullin-based SCF-like E3 ubiquitin-protein ligase complexes which mediate the ubiquitination and subsequent proteasomal degradation of target proteins. The E3 ubiquitin-protein ligase activity of the complex is dependent on the neddylation of the cullin subunit. The chain is Cullin-4 (culD) from Dictyostelium discoideum (Social amoeba).